Reading from the N-terminus, the 693-residue chain is Lamina-associated polypeptide 2, isoforms alpha/zeta (693 aa).

Residues 5–48 form the LEM-like domain; that stretch reads LEDPSVLTKDKLKSELVANNVTLPAGEQRKDVYVQLYLQHLTAR. Disordered regions lie at residues 48–113, 148–211, and 227–270; these read RNRP…DVTE, LREQ…LAST, and TRPP…KLAP. The linker stretch occupies residues 49 to 107; sequence NRPPLAAGANSKGPPDFSSDEEREPTPVLGSGASVGRGRGAVGRKATKKTDKPRLEDKD. Phosphoserine occurs at positions 59, 66, and 67. Position 74 is a phosphothreonine (Thr74). A phosphoserine mark is found at Ser79 and Ser82. Omega-N-methylarginine is present on residues Arg85 and Arg87. The segment covering 96–105 has biased composition (basic and acidic residues); that stretch reads KKTDKPRLED. Residues 108–152 form the LEM domain; sequence DLDVTELSNEELLDQLVRYGVNPGPIVGTTRKLYEKKLLKLREQG. Thr153 is modified (phosphothreonine). Polar residues predominate over residues 154–177; the sequence is ESRSSTPLPTVSSSAENTRQNGSN. 2 positions are modified to phosphoserine: Ser155 and Ser158. 2 positions are modified to phosphothreonine: Thr159 and Thr163. Phosphoserine is present on residues Ser165 and Ser167. Residues 178–190 are compositionally biased toward basic and acidic residues; the sequence is DSDRYSDNDEGKK. Residues 190 to 196 carry the Nuclear localization signal motif; sequence KKEHKKV. The residue at position 206 (Ser206) is an N6-acetyllysine. Basic and acidic residues predominate over residues 245–254; sequence TKRDPPRETC. Ser310 is subject to Phosphoserine. The residue at position 329 (Arg329) is an Omega-N-methylarginine. The disordered stretch occupies residues 332-351; the sequence is KSRAQPLRAEEPGVSDQSVF. Phosphoserine is present on residues Ser349, Ser352, Ser368, Ser420, and Ser422. Positions 412 to 422 are enriched in low complexity; sequence QSSYQDSESLS. Residues 412 to 442 are disordered; that stretch reads QSSYQDSESLSPPRKVPRLSEKPARGGDSGS. The stretch at 557-656 forms a coiled coil; that stretch reads TESCDKHLDL…MGRRYLWLKD (100 aa). The residue at position 655 (Lys655) is an N6-acetyllysine.

This sequence belongs to the LEM family. Homooligomer. Interacts with LMNA, BANF1 and RB1 and with chromosomes. Associates directly or indirectly with lamins at specific cell-cycle stages. Interacts with CMTM6. Phosphorylated in a mitose-specific manner.

It is found in the nucleus. The protein resides in the chromosome. Its function is as follows. May be involved in the structural organization of the nucleus and in the post-mitotic nuclear assembly. Plays an important role, together with LMNA, in the nuclear anchorage of RB1. This is Lamina-associated polypeptide 2, isoforms alpha/zeta (Tmpo) from Mus musculus (Mouse).